The following is a 645-amino-acid chain: Glucans biosynthesis glucosyltransferase H (645 aa).

Residues 1-28 form a disordered region; sequence MDGTVTLSPAPTDLPPVSSLDAGQPTLP. The next 7 helical transmembrane spans lie at 64–84, 98–118, 423–443, 465–485, 504–524, 558–578, and 580–600; these read LIGGTLTATAVAVWVMLSVLW, LFVLLFAWIAMSFASAVAGFI, APMWGMLMLVGIGIPLAGAGI, AIWIFVCTMFVLLAPKLLGYI, ALSILLETVLAALMAPVVMYL, SYGGLSVFGLFMGTLAYLVSP, and LAAWMAPVIVGMVVSIPVVAV.

It belongs to the glycosyltransferase 2 family. OpgH subfamily.

It is found in the cell inner membrane. The protein operates within glycan metabolism; osmoregulated periplasmic glucan (OPG) biosynthesis. Involved in the biosynthesis of osmoregulated periplasmic glucans (OPGs). This chain is Glucans biosynthesis glucosyltransferase H, found in Xanthomonas campestris pv. campestris (strain 8004).